A 302-amino-acid polypeptide reads, in one-letter code: Serine/threonine-protein phosphatase alpha-2 isoform (302 aa).

Residues D62, H64, D90, and N122 each coordinate Mn(2+). H123 (proton donor) is an active-site residue. 2 residues coordinate Mn(2+): H171 and H246.

Belongs to the PPP phosphatase family. PP-1 subfamily. Interacts with Nop17l. Interacts with uri; uri inhibits Pp1-87B phosphatase activity. Interacts with Rif1. Mn(2+) is required as a cofactor.

Its subcellular location is the cytoplasm. It catalyses the reaction O-phospho-L-seryl-[protein] + H2O = L-seryl-[protein] + phosphate. The catalysed reaction is O-phospho-L-threonyl-[protein] + H2O = L-threonyl-[protein] + phosphate. Its function is as follows. Is essential for the regulation of mitotic chromosomal segregation as well as regulation of chromatin condensation during interphase. This chain is Serine/threonine-protein phosphatase alpha-2 isoform (Pp1-87B), found in Drosophila melanogaster (Fruit fly).